Consider the following 212-residue polypeptide: Protein Nef (212 aa).

Residue Gly-2 is the site of N-myristoyl glycine; by host attachment. Ser-6 carries the post-translational modification Phosphoserine; by host. An acidic; interacts with host PACS1 and PACS2; stabilizes the interaction of NEF/MHC-I with host AP1M1; necessary for MHC-I internalization region spans residues 67-71; the sequence is EEEEE. Positions 75 to 84 are SH3-binding; interaction with Src family tyrosine kinases; that stretch reads PVRPQVPLRP. The PxxP; stabilizes the interaction of NEF/MHC-I with host AP1M1; necessary for MHC-I internalization signature appears at 78 to 81; sequence PQVP. Residues 114–130 are mediates dimerization, Nef-PTE1 interaction; it reads DILDLWMYHTQGILPDW. The tract at residues 154 to 186 is binding to ATP6V1H; the sequence is LSAEEVEEANEGDNNALLHPICQHGADDDHKEV. Residues 170–171 carry the Dileucine internalization motif; necessary for CD4 internalization motif; sequence LL. A Diacidic; necessary for CD4 internalization motif is present at residues 180-181; sequence DD.

This sequence belongs to the lentivirus primate group Nef protein family. Monomer; cytosolic form. Homodimer; membrane bound form. Interacts with Nef associated p21-activated kinase (PAK2); this interaction activates PAK2. Associates with the Nef-MHC-I-AP1 complex; this complex is required for MHC-I internalization. Interacts (via C-terminus) with host PI3-kinase. Interacts with host PACS1; this interaction seems to be weak. Interacts with host PACS2. Interacts with host LCK and MAPK3; these interactions inhibit the kinase activity of the latter. Interacts with host ATP6V1H; this interaction may play a role in CD4 endocytosis. Associates with the CD4-Nef-AP2 complex; this complex is required for CD4 internalization. Interacts with host AP2 subunit alpha and AP2 subunit sigma2. Interacts with TCR-zeta chain; this interaction up-regulates the Fas ligand (FasL) surface expression. Interacts with host HCK, LYN, and SRC; these interactions activate the Src family kinases. Interacts with MAP3K5; this interaction inhibits the Fas and TNFR-mediated death signals. Interacts with beta-COP and PTE1. Interacts with human RACK1; this increases Nef phosphorylation by PKC. Interacts with TP53; this interaction decreases the half-life of TP53, protecting the infected cell against p53-mediated apoptosis. Post-translationally, the virion-associated Nef proteins are cleaved by the viral protease to release the soluble C-terminal core protein. Nef is probably cleaved concomitantly with viral structural proteins on maturation of virus particles. In terms of processing, myristoylated. Phosphorylated on serine residues, probably by host PKCdelta and theta.

The protein localises to the host cell membrane. It is found in the virion. It localises to the secreted. The protein resides in the host Golgi apparatus membrane. Functionally, factor of infectivity and pathogenicity, required for optimal virus replication. Alters numerous pathways of T-lymphocyte function and down-regulates immunity surface molecules in order to evade host defense and increase viral infectivity. Alters the functionality of other immunity cells, like dendritic cells, monocytes/macrophages and NK cells. In infected CD4(+) T-lymphocytes, down-regulates the surface MHC-I, mature MHC-II, CD4, CD28, CCR5 and CXCR4 molecules. Mediates internalization and degradation of host CD4 through the interaction of with the cytoplasmic tail of CD4, the recruitment of AP-2 (clathrin adapter protein complex 2), internalization through clathrin coated pits, and subsequent transport to endosomes and lysosomes for degradation. Diverts host MHC-I molecules to the trans-Golgi network-associated endosomal compartments by an endocytic pathway to finally target them for degradation. MHC-I down-regulation may involve AP-1 (clathrin adapter protein complex 1) or possibly Src family kinase-ZAP70/Syk-PI3K cascade recruited by PACS2. In consequence infected cells are masked for immune recognition by cytotoxic T-lymphocytes. Decreasing the number of immune receptors also prevents reinfection by more HIV particles (superinfection). Down-regulates host SERINC3 and SERINC5 thereby excluding these proteins from the viral particles. Virion infectivity is drastically higher when SERINC3 or SERINC5 are excluded from the viral envelope, because these host antiviral proteins impair the membrane fusion event necessary for subsequent virion penetration. In terms of biological role, bypasses host T-cell signaling by inducing a transcriptional program nearly identical to that of anti-CD3 cell activation. Interaction with TCR-zeta chain up-regulates the Fas ligand (FasL). Increasing surface FasL molecules and decreasing surface MHC-I molecules on infected CD4(+) cells send attacking cytotoxic CD8+ T-lymphocytes into apoptosis. Its function is as follows. Plays a role in optimizing the host cell environment for viral replication without causing cell death by apoptosis. Protects the infected cells from apoptosis in order to keep them alive until the next virus generation is ready to strike. Inhibits the Fas and TNFR-mediated death signals by blocking MAP3K5/ASK1. Decreases the half-life of TP53, protecting the infected cell against p53-mediated apoptosis. Inhibits the apoptotic signals regulated by the Bcl-2 family proteins through the formation of a Nef/PI3-kinase/PAK2 complex that leads to activation of PAK2 and induces phosphorylation of host BAD. Functionally, extracellular Nef protein targets CD4(+) T-lymphocytes for apoptosis by interacting with CXCR4 surface receptors. In Human immunodeficiency virus type 1 group N (isolate YBF30) (HIV-1), this protein is Protein Nef.